The sequence spans 156 residues: Small ribosomal subunit protein uS7 (156 aa).

This sequence belongs to the universal ribosomal protein uS7 family. Part of the 30S ribosomal subunit. Contacts proteins S9 and S11.

One of the primary rRNA binding proteins, it binds directly to 16S rRNA where it nucleates assembly of the head domain of the 30S subunit. Is located at the subunit interface close to the decoding center, probably blocks exit of the E-site tRNA. This chain is Small ribosomal subunit protein uS7, found in Geobacillus thermodenitrificans (strain NG80-2).